The chain runs to 269 residues: ParA family protein MG470 (269 aa).

Belongs to the ParA family.

This Mycoplasma genitalium (strain ATCC 33530 / DSM 19775 / NCTC 10195 / G37) (Mycoplasmoides genitalium) protein is ParA family protein MG470.